A 430-amino-acid chain; its full sequence is Probable ribosomal RNA small subunit methyltransferase B (430 aa).

S-adenosyl-L-methionine-binding positions include 246 to 252, Asp-270, Asp-299, and Asp-318; that span reads CAAPGSK. Residue Cys-371 is the Nucleophile of the active site.

The protein belongs to the class I-like SAM-binding methyltransferase superfamily. RsmB/NOP family.

The protein localises to the cytoplasm. It carries out the reaction cytidine(967) in 16S rRNA + S-adenosyl-L-methionine = 5-methylcytidine(967) in 16S rRNA + S-adenosyl-L-homocysteine + H(+). In terms of biological role, specifically methylates the cytosine at position 967 (m5C967) of 16S rRNA. The protein is Probable ribosomal RNA small subunit methyltransferase B of Coxiella burnetii (strain RSA 493 / Nine Mile phase I).